Reading from the N-terminus, the 150-residue chain is UPF0756 membrane protein ACICU_02320 (150 aa).

4 consecutive transmembrane segments (helical) span residues 1 to 21, 45 to 65, 83 to 103, and 115 to 135; these read MLAQ…CGLL, FFPY…TIGV, FISF…WLGG, and VVAG…GVPV.

Belongs to the UPF0756 family.

The protein resides in the cell membrane. The protein is UPF0756 membrane protein ACICU_02320 of Acinetobacter baumannii (strain ACICU).